Reading from the N-terminus, the 872-residue chain is DNA mismatch repair protein MutS (872 aa).

622–629 lines the ATP pocket; it reads GPNMAGKS.

The protein belongs to the DNA mismatch repair MutS family.

Its function is as follows. This protein is involved in the repair of mismatches in DNA. It is possible that it carries out the mismatch recognition step. This protein has a weak ATPase activity. The protein is DNA mismatch repair protein MutS of Geotalea uraniireducens (strain Rf4) (Geobacter uraniireducens).